We begin with the raw amino-acid sequence, 170 residues long: ATP synthase subunit b (170 aa).

A helical membrane pass occupies residues 3 to 23 (IKILFFLALPFLAYASEHGGT).

This sequence belongs to the ATPase B chain family. F-type ATPases have 2 components, F(1) - the catalytic core - and F(0) - the membrane proton channel. F(1) has five subunits: alpha(3), beta(3), gamma(1), delta(1), epsilon(1). F(0) has three main subunits: a(1), b(2) and c(10-14). The alpha and beta chains form an alternating ring which encloses part of the gamma chain. F(1) is attached to F(0) by a central stalk formed by the gamma and epsilon chains, while a peripheral stalk is formed by the delta and b chains.

It is found in the cell inner membrane. In terms of biological role, f(1)F(0) ATP synthase produces ATP from ADP in the presence of a proton or sodium gradient. F-type ATPases consist of two structural domains, F(1) containing the extramembraneous catalytic core and F(0) containing the membrane proton channel, linked together by a central stalk and a peripheral stalk. During catalysis, ATP synthesis in the catalytic domain of F(1) is coupled via a rotary mechanism of the central stalk subunits to proton translocation. Component of the F(0) channel, it forms part of the peripheral stalk, linking F(1) to F(0). The chain is ATP synthase subunit b from Campylobacter concisus (strain 13826).